Here is a 207-residue protein sequence, read N- to C-terminus: Ribosomal RNA large subunit methyltransferase E (207 aa).

S-adenosyl-L-methionine is bound by residues Gly60, Trp62, Asp80, Asp96, and Asp121. Lys161 (proton acceptor) is an active-site residue.

It belongs to the class I-like SAM-binding methyltransferase superfamily. RNA methyltransferase RlmE family.

The protein resides in the cytoplasm. The catalysed reaction is uridine(2552) in 23S rRNA + S-adenosyl-L-methionine = 2'-O-methyluridine(2552) in 23S rRNA + S-adenosyl-L-homocysteine + H(+). In terms of biological role, specifically methylates the uridine in position 2552 of 23S rRNA at the 2'-O position of the ribose in the fully assembled 50S ribosomal subunit. This Methylobacillus flagellatus (strain ATCC 51484 / DSM 6875 / VKM B-1610 / KT) protein is Ribosomal RNA large subunit methyltransferase E.